Reading from the N-terminus, the 270-residue chain is NAD kinase (270 aa).

The Proton acceptor role is filled by aspartate 49. NAD(+) is bound by residues 49 to 50 (DG), arginine 54, 126 to 127 (NE), arginine 152, aspartate 154, 165 to 170 (TAYNKS), alanine 189, and glutamine 227.

This sequence belongs to the NAD kinase family. A divalent metal cation is required as a cofactor.

Its subcellular location is the cytoplasm. The enzyme catalyses NAD(+) + ATP = ADP + NADP(+) + H(+). Involved in the regulation of the intracellular balance of NAD and NADP, and is a key enzyme in the biosynthesis of NADP. Catalyzes specifically the phosphorylation on 2'-hydroxyl of the adenosine moiety of NAD to yield NADP. This Lactococcus lactis subsp. lactis (strain IL1403) (Streptococcus lactis) protein is NAD kinase.